The chain runs to 180 residues: Outer-membrane lipoprotein LolB (180 aa).

A signal peptide spans 1–16 (MIRRVLLLSLALLLAG). Residue Cys17 is the site of N-palmitoyl cysteine attachment. Residue Cys17 is the site of S-diacylglycerol cysteine attachment.

The protein belongs to the LolB family. As to quaternary structure, monomer.

It is found in the cell outer membrane. In terms of biological role, plays a critical role in the incorporation of lipoproteins in the outer membrane after they are released by the LolA protein. The polypeptide is Outer-membrane lipoprotein LolB (Chromobacterium violaceum (strain ATCC 12472 / DSM 30191 / JCM 1249 / CCUG 213 / NBRC 12614 / NCIMB 9131 / NCTC 9757 / MK)).